A 105-amino-acid polypeptide reads, in one-letter code: uncharacterized protein (105 aa).

Residues 8-28 (FMTAGIIIALIIAVLAPFLAS) traverse the membrane as a helical segment. A disordered region spans residues 32–53 (DGLESTAEKVMPNPETEPVLES). Residues 72-92 (VSMVIGTILVLAIAYGVGAVF) form a helical membrane-spanning segment.

This sequence to M.jannaschii MJ1570.

It is found in the cell membrane. This is an uncharacterized protein from Methanothermobacter thermautotrophicus (strain ATCC 29096 / DSM 1053 / JCM 10044 / NBRC 100330 / Delta H) (Methanobacterium thermoautotrophicum).